A 112-amino-acid polypeptide reads, in one-letter code: Putative iron-sulfur cluster insertion protein ErpA (112 aa).

Iron-sulfur cluster contacts are provided by cysteine 40, cysteine 104, and cysteine 106.

It belongs to the HesB/IscA family. Homodimer. It depends on iron-sulfur cluster as a cofactor.

In terms of biological role, required for insertion of 4Fe-4S clusters. The sequence is that of Putative iron-sulfur cluster insertion protein ErpA from Neisseria gonorrhoeae (strain ATCC 700825 / FA 1090).